The primary structure comprises 178 residues: Nucleoplasmin-3 (178 aa).

Ala-2 is modified (N-acetylalanine). A phosphoserine mark is found at Ser-13 and Ser-16. Arg-27 bears the Omega-N-methylarginine mark. The tract at residues 141 to 178 (TMSNDVSEEESEEEEEDSDEEEVELCPILPAKKQGGRP) is disordered. Residues 146 to 164 (VSEEESEEEEEDSDEEEVE) show a composition bias toward acidic residues. Phosphoserine is present on residues Ser-147, Ser-151, and Ser-158.

It belongs to the nucleoplasmin family. In terms of assembly, interacts with NPM (via N-terminus). Forms a pentamer with NPM at a ratio 4:1 (NPM3/NPM). Two pentamers form a decamer. In terms of processing, phosphorylated. Ubiquitous.

Its subcellular location is the nucleus. It is found in the nucleolus. Functionally, plays a role in the regulation of diverse cellular processes such as ribosome biogenesis, chromatin remodeling or protein chaperoning. Modulates the histone chaperone function and the RNA-binding activity of nucleolar phosphoprotein B23/NPM. Efficiently mediates chromatin remodeling when included in a pentamer containing NPM3 and NPM. This chain is Nucleoplasmin-3 (NPM3), found in Homo sapiens (Human).